A 313-amino-acid chain; its full sequence is GTP cyclohydrolase MptA (313 aa).

Belongs to the GTP cyclohydrolase IV family. Homodimer. The cofactor is Fe(2+).

The enzyme catalyses GTP + H2O = 7,8-dihydroneopterin 2',3'-cyclic phosphate + formate + diphosphate + H(+). It participates in cofactor biosynthesis; 5,6,7,8-tetrahydromethanopterin biosynthesis. Its function is as follows. Converts GTP to 7,8-dihydro-D-neopterin 2',3'-cyclic phosphate, the first intermediate in the biosynthesis of coenzyme methanopterin. The chain is GTP cyclohydrolase MptA from Methanoculleus marisnigri (strain ATCC 35101 / DSM 1498 / JR1).